The primary structure comprises 259 residues: ATP synthase subunit b 2 (259 aa).

The helical transmembrane segment at 5 to 27 (WFTVSAQAINFLILVALLKRFLY) threads the bilayer.

This sequence belongs to the ATPase B chain family. As to quaternary structure, F-type ATPases have 2 components, F(1) - the catalytic core - and F(0) - the membrane proton channel. F(1) has five subunits: alpha(3), beta(3), gamma(1), delta(1), epsilon(1). F(0) has three main subunits: a(1), b(2) and c(10-14). The alpha and beta chains form an alternating ring which encloses part of the gamma chain. F(1) is attached to F(0) by a central stalk formed by the gamma and epsilon chains, while a peripheral stalk is formed by the delta and b chains.

The protein resides in the cell inner membrane. F(1)F(0) ATP synthase produces ATP from ADP in the presence of a proton or sodium gradient. F-type ATPases consist of two structural domains, F(1) containing the extramembraneous catalytic core and F(0) containing the membrane proton channel, linked together by a central stalk and a peripheral stalk. During catalysis, ATP synthesis in the catalytic domain of F(1) is coupled via a rotary mechanism of the central stalk subunits to proton translocation. Functionally, component of the F(0) channel, it forms part of the peripheral stalk, linking F(1) to F(0). In Syntrophotalea carbinolica (strain DSM 2380 / NBRC 103641 / GraBd1) (Pelobacter carbinolicus), this protein is ATP synthase subunit b 2.